The sequence spans 80 residues: Turripeptide VI/VII-01 (80 aa).

The signal sequence occupies residues 1–22 (MRLQLILTITLLLTSFMGYRDA). Residues 23-36 (AVIQGKTERSAMKM) constitute a propeptide that is removed on maturation. 3 disulfide bridges follow: Cys48/Cys61, Cys50/Cys65, and Cys60/Cys70. Residues 77 to 80 (SSAI) constitute a propeptide that is removed on maturation.

In terms of tissue distribution, expressed by the venom duct.

It localises to the secreted. The chain is Turripeptide VI/VII-01 from Gemmula speciosa (Splendid gem-turris).